The following is a 191-amino-acid chain: MASSTTNNPALDLDSDTPENPGHELAQFASGCFWGSELRFQRVVGVIKTEVGYSQGHVHDPNYRLVCSGTTNHSEVVRVQFDPQVCPYSDLLSVFWSRHDPTTLNRQGGDVGTQYRSGIYYYNEEQDCLAKKSKEAKQKEFKDKRVVTEILPAKRFYRAEEYHQQYLEKGGGNGNKQSAQKGCNDPIKCYG.

Disordered stretches follow at residues 1–20 and 168–191; these read MASS…TPEN and EKGG…KCYG.

The protein belongs to the MsrA Met sulfoxide reductase family.

It catalyses the reaction L-methionyl-[protein] + [thioredoxin]-disulfide + H2O = L-methionyl-(S)-S-oxide-[protein] + [thioredoxin]-dithiol. The catalysed reaction is [thioredoxin]-disulfide + L-methionine + H2O = L-methionine (S)-S-oxide + [thioredoxin]-dithiol. In terms of biological role, has an important function as a repair enzyme for proteins that have been inactivated by oxidation. Catalyzes the reversible oxidation-reduction of methionine sulfoxide in proteins to methionine. In Fragaria ananassa (Strawberry), this protein is Peptide methionine sulfoxide reductase.